Consider the following 397-residue polypeptide: Tryptophan synthase beta chain (397 aa).

Lys87 carries the N6-(pyridoxal phosphate)lysine modification.

This sequence belongs to the TrpB family. Tetramer of two alpha and two beta chains. The cofactor is pyridoxal 5'-phosphate.

The enzyme catalyses (1S,2R)-1-C-(indol-3-yl)glycerol 3-phosphate + L-serine = D-glyceraldehyde 3-phosphate + L-tryptophan + H2O. It functions in the pathway amino-acid biosynthesis; L-tryptophan biosynthesis; L-tryptophan from chorismate: step 5/5. Functionally, the beta subunit is responsible for the synthesis of L-tryptophan from indole and L-serine. In Salmonella agona (strain SL483), this protein is Tryptophan synthase beta chain.